Reading from the N-terminus, the 312-residue chain is Malate dehydrogenase (312 aa).

NAD(+) is bound by residues 7–13 (GAAGGIG) and Asp34. Positions 81 and 87 each coordinate substrate. NAD(+) is bound by residues Asn94 and 117 to 119 (ITN). Residues Asn119 and Arg153 each contribute to the substrate site. Catalysis depends on His177, which acts as the Proton acceptor. Residue Met227 participates in NAD(+) binding.

Belongs to the LDH/MDH superfamily. MDH type 1 family. As to quaternary structure, homodimer.

The catalysed reaction is (S)-malate + NAD(+) = oxaloacetate + NADH + H(+). Functionally, catalyzes the reversible oxidation of malate to oxaloacetate. The chain is Malate dehydrogenase from Salmonella choleraesuis (strain SC-B67).